Reading from the N-terminus, the 609-residue chain is MTDDTKGTKFDPKEGCSDWFVLEAECSDNSLDGDLEKLFEEGNDTDISDLIDDEDTVQGNSRELLCQQQSEESEQQIHLLKRKYFSSQEILQLSPRLQSITISPQHKSKRRLFEGDSGLELSFNEAEDFTQQTLEVQEVSASGSEPADQGAKGLGIVKDLLKCSNVKAMLLAKFKEAFGVGFMELTRQYKSCKTCCRDWVVTLYAVQDELIESSKQLLLQHCAYIWLQHMPPMCLYLLCFNVGKSRETVFRLLMNLLQVAEVQILAEPPKLRSTLSALFWYKGSMNPNVYAHGEYPEWIMTQTMINHQSAEATQFDLSTMIQYAYDNDLINEDEIAYNYAKLADTDANARAFLQHNSQARFVRECALMVRYYKRGEMKDMSISAWIHNKMLVVEGEGHWSDIVKFVRFQDINFIRFLDVFKSFLHNTPKKNCLLFYGPPDTGKSMFTMSLIKVLKGKVLSFANYKSNFWLQPLADTKIALIDDVTHVCWDYIDQYLRNGLDGNFVCLDLKHRAPCQIKFPPLLLTSNMDIMKEERYRYLHSRVHAFAFPNKFPFDSNNKPQFRLTDQSWKSFFERLWKQLDLSDQEDEGDDGHTQRSFQCTAREPNGHL.

A Nuclear localization signal motif is present at residues 81–83; sequence KRK. Phosphoserine; by host is present on residues Ser-87 and Ser-94. The Nuclear export signal motif lies at 93 to 102; it reads LSPRLQSITI. The segment at 149-312 is DNA-binding region; that stretch reads QGAKGLGIVK…TMINHQSAEA (164 aa). An SF3 helicase domain is found at 411–561; it reads INFIRFLDVF…FPFDSNNKPQ (151 aa). Position 437-444 (437-444) interacts with ATP; that stretch reads GPPDTGKS. Residue Lys-518 forms a Glycyl lysine isopeptide (Lys-Gly) (interchain with G-Cter in SUMO) linkage. Positions 584–609 are disordered; that stretch reads DQEDEGDDGHTQRSFQCTAREPNGHL.

This sequence belongs to the papillomaviridae E1 protein family. As to quaternary structure, can form hexamers. Interacts with E2 protein; this interaction increases E1 DNA binding specificity. Interacts with host DNA polymerase subunit POLA2. Interacts with host single stranded DNA-binding protein RPA1. Interacts with host TOP1; this interaction stimulates the enzymatic activity of TOP1. In terms of processing, phosphorylated. Post-translationally, sumoylated.

The protein localises to the host nucleus. It catalyses the reaction Couples ATP hydrolysis with the unwinding of duplex DNA by translocating in the 3'-5' direction.. It carries out the reaction ATP + H2O = ADP + phosphate + H(+). ATP-dependent DNA 3'-5' helicase required for initiation of viral DNA replication. It forms a complex with the viral E2 protein. The E1-E2 complex binds to the replication origin which contains binding sites for both proteins. During the initial step, a dimer of E1 interacts with a dimer of protein E2 leading to a complex that binds the viral origin of replication with high specificity. Then, a second dimer of E1 displaces the E2 dimer in an ATP-dependent manner to form the E1 tetramer. Following this, two E1 monomers are added to each half of the site, which results in the formation of two E1 trimers on the viral ori. Subsequently, two hexamers will be created. The double hexamer acts as a bi-directional helicase machinery and unwinds the viral DNA and then recruits the host DNA polymerase to start replication. In Human papillomavirus 37, this protein is Replication protein E1.